The primary structure comprises 61 residues: Double gene block protein 2 (61 aa).

Over 1 to 12 (MACCRCDSSPGD) the chain is Cytoplasmic. A helical; Signal-anchor for type II membrane protein transmembrane segment spans residues 13–33 (YSGALLILFISFVFFYITSLS). The Lumenal portion of the chain corresponds to 34 to 61 (PQGNTYVHHFDSSSVKTQYVGISTNGDG).

It belongs to the gammacarmovirus double gene block protein 2 family.

It localises to the host endoplasmic reticulum membrane. In terms of biological role, cell-to-cell movement function. The sequence is that of Double gene block protein 2 from Melon necrotic spot virus (MNSV).